Consider the following 110-residue polypeptide: DNA-binding protein Pars_1791 (110 aa).

It belongs to the PDCD5 family.

This chain is DNA-binding protein Pars_1791, found in Pyrobaculum arsenaticum (strain DSM 13514 / JCM 11321 / PZ6).